We begin with the raw amino-acid sequence, 142 residues long: MGAPSLPRAWQLYLKEHRVSTFKNWPFVNGCSCTPERMAEAGFIHCPTENEPDLAQCFFCFKELEGWEPDDNPIEEHKKHSSGCAFLSVKKQFEELTLSEFLKLDKERAKNKIAKETNSKQKEFEETAAKVRQAMEQLAALE.

One copy of the BIR repeat lies at 18-88 (RVSTFKNWPF…KHSSGCAFLS (71 aa)). Serine 20 bears the Phosphoserine; by AURKC mark. Lysine 23 is modified (N6-acetyllysine). Threonine 34 carries the phosphothreonine; by CDK1 and CDK15 modification. Threonine 48 is subject to Phosphothreonine; by CK2; in vitro. Positions 57, 60, 77, and 84 each coordinate Zn(2+). N6-acetyllysine occurs at positions 90, 110, 112, and 115. Position 117 is a phosphothreonine; by AURKB (threonine 117).

It belongs to the IAP family. As to quaternary structure, monomer or homodimer. Exists as a homodimer in the apo state and as a monomer in the CPC-bound state. The monomer protects cells against apoptosis more efficiently than the dimer. Only the dimeric form is capable of enhancing tubulin stability in cells. When phosphorylated, interacts with LAMTOR5/HBXIP; the resulting complex binds pro-CASP9, as well as active CASP9, but much less efficiently. Component of the chromosomal passenger complex (CPC) composed of at least BIRC5/survivin, CDCA8/borealin, INCENP, AURKB or AURKC; in the complex forms a triple-helix bundle-based subcomplex with INCENP and CDCA8. Interacts with JTB. Interacts (via BIR domain) with histone H3 phosphorylated at 'Thr-3' (H3pT3). Interacts with EVI5. Interacts with GTP-bound RAN in both the S and M phases of the cell cycle. Interacts with USP9X. Interacts with tubulin. Interacts with BIRC2/c-IAP1. The monomeric form interacts with XIAP/BIRC4. Both the dimeric and monomeric form can interact with DIABLO/SMAC. Interacts with BIRC6/bruce. Interacts with FBXL7; this interaction facilitates the polyubiquitination and subsequent proteasomal degradation of BIRC5 by the SCF(FBXL7) E3 ubiquitin-protein ligase complex. Post-translationally, ubiquitinated by the Cul9-RING ubiquitin-protein ligase complex, leading to its degradation. Ubiquitination is required for centrosomal targeting. Deubiquitinated by USP35 or USP38; leading to stabilization. In vitro phosphorylation at Thr-117 by AURKB prevents interaction with INCENP and localization to mitotic chromosomes. Phosphorylation at Thr-48 by CK2 is critical for its mitotic and anti-apoptotic activities. Phosphorylation at Thr-34 by CDK15 is critical for its anti-apoptotic activity. Phosphorylation at Ser-20 by AURKC is critical for regulation of proper chromosome alignment and segregation, and possibly cytokinesis. As to expression, expressed in spleen, lung, brain, heart, kidney and intestine (at protein level). Expressed in cochlea including the organ of Corti, the lateral wall, the interdental cells of the Limbus as well as in cells of the cochlear nerve and the spiral ganglions (at protein level). Also expressed in Schwann cells (at protein level). Not expressed in cells of the inner and outer sulcus or the Reissner's membrane (at protein level).

Its subcellular location is the cytoplasm. The protein localises to the nucleus. It localises to the chromosome. It is found in the centromere. The protein resides in the cytoskeleton. Its subcellular location is the spindle. The protein localises to the kinetochore. It localises to the midbody. In terms of biological role, multitasking protein that has dual roles in promoting cell proliferation and preventing apoptosis. Component of a chromosome passage protein complex (CPC) which is essential for chromosome alignment and segregation during mitosis and cytokinesis. Acts as an important regulator of the localization of this complex; directs CPC movement to different locations from the inner centromere during prometaphase to midbody during cytokinesis and participates in the organization of the center spindle by associating with polymerized microtubules. Involved in the recruitment of CPC to centromeres during early mitosis via association with histone H3 phosphorylated at 'Thr-3' (H3pT3) during mitosis. The complex with RAN plays a role in mitotic spindle formation by serving as a physical scaffold to help deliver the RAN effector molecule TPX2 to microtubules. May counteract a default induction of apoptosis in G2/M phase. The acetylated form represses STAT3 transactivation of target gene promoters. May play a role in neoplasia. Inhibitor of CASP3 and CASP7. Essential for the maintenance of mitochondrial integrity and function. The protein is Baculoviral IAP repeat-containing protein 5 of Cavia porcellus (Guinea pig).